The sequence spans 1392 residues: DNA-directed RNA polymerase subunit beta'' (1392 aa).

Positions 224, 295, 302, and 305 each coordinate Zn(2+).

The protein belongs to the RNA polymerase beta' chain family. RpoC2 subfamily. In terms of assembly, in plastids the minimal PEP RNA polymerase catalytic core is composed of four subunits: alpha, beta, beta', and beta''. When a (nuclear-encoded) sigma factor is associated with the core the holoenzyme is formed, which can initiate transcription. Requires Zn(2+) as cofactor.

The protein localises to the plastid. It is found in the chloroplast. It carries out the reaction RNA(n) + a ribonucleoside 5'-triphosphate = RNA(n+1) + diphosphate. In terms of biological role, DNA-dependent RNA polymerase catalyzes the transcription of DNA into RNA using the four ribonucleoside triphosphates as substrates. This chain is DNA-directed RNA polymerase subunit beta'', found in Solanum tuberosum (Potato).